The following is a 284-amino-acid chain: Protoheme IX farnesyltransferase (284 aa).

Transmembrane regions (helical) follow at residues 2–19 (SLVVFTALVGLLVAPVTV), 23–45 (IALTGILFIALGAGASGALNMWS), 69–89 (GEALGIGLALSGIAVVMLGLA), 92–112 (LFAAGLLAFTIFFYAVVYSMW), 121–141 (IVIGGAAGAFPPMIGWAVATG), 148–168 (LFMFALIFMWTPPHFWSLALF), 194–214 (VLVYSLLLAPLAVAGAFTGTG), 217–237 (LYLATALALNGWLLVGAVRTW), and 263–283 (LFLHFGAILAEAALKPYGLGG).

This sequence belongs to the UbiA prenyltransferase family. Protoheme IX farnesyltransferase subfamily. As to quaternary structure, interacts with CtaA.

The protein localises to the cell inner membrane. The enzyme catalyses heme b + (2E,6E)-farnesyl diphosphate + H2O = Fe(II)-heme o + diphosphate. Its pathway is porphyrin-containing compound metabolism; heme O biosynthesis; heme O from protoheme: step 1/1. Its function is as follows. Converts heme B (protoheme IX) to heme O by substitution of the vinyl group on carbon 2 of heme B porphyrin ring with a hydroxyethyl farnesyl side group. This Cereibacter sphaeroides (Rhodobacter sphaeroides) protein is Protoheme IX farnesyltransferase.